A 1194-amino-acid chain; its full sequence is MDRGGYRGGRGDGRGRGGGGDRGRGYSGRGDGRGRGGDGDRGYSGRGDGHGRGGGGDRGRGYSGRGDGRGRGGGGDRGRGYSGRGDGHGRGGGGDRGRGYSGRGRGFVQDRDGGWVNPGQSSGGHVRGRGTQLQQPPPQEVPPSSSQAQVSQGVAPGDVGQGGVGDVGRDGVGDVGRDGVGDVGQGGVGDVGQVGVGDVGQGGVGDVGQGGVGDVGRDGVGDVGRDGVGDVGRGGVGDRGQSQSGLSSGHFGRGTQLQQPQPQAVSQSSSQGQVSQSFATGGVGLGAWARKPQLFSDSTVLPSSSSSNVVASHTASGSQVMTPKPSSSDKKEPVKRPDKGGNIKVKGVINLSVNHFRVSFSTESVIRHYDVDIKGENSSKKISRFELAMVKEKLFKDNNDFPNAMTAYDGQKNIFSAVELPTGSFKVDFSETEEIMRGRSYTFIIKQVKELKLLDLQAYIDGRSTFIPRDVLQGMDVVMKEHPSKRMITVGKRFFSTRLEIDFGYGVGAAKGFHHTLKPTVQGLSLCLNSSLLAFRKAISVIEYLKLYFGWRNIRQFKNCRPDDVVQELIGLKVTVDHRKTKQKFIIMGLSKDDTKDIKFDFIDHAGNQPPRKISIVEYFKEKYGRDIDHKDIPCLNLGKKGRENFVPMEFCNLVEGQIFPKEKLYRDSAAWLKELSLVTPQQRLENINKMIKSSDGPRGGDIIGNFGLRVDPNMTTVEGRVLEAPTLKLTDRRGNPIHEKLMSESNQWNLTTKGVTKGSIIKHWAVLDFTASESLKKKMPGYFVNKLIERCKGLGMQMEAPIVCKTSSMETLYDGNALEELLRSVIDEASHNHGGACPTLVLCAMTGKHDGYKTLKWIAETKLGLVTQCFLTISAIKGETVSDQYLANLALKINAKVGGTNVELVDNIFSFFKKEDKVMFIGADVNHPAAHDNMSPSIVAVVGTLNWPEANRYAARVKAQSHRKEEIQGFGETCWELIEAHSQAPEKRPNKIVIFRDGVSDGQFDMVLNVELQNVKDVFAKVGYNPQITVIVAQKRHQTRFFPATTSKDGRAKGNVPSGTVVDTTIIHPFEYDFYLCSQHGAIGTSKPTHYYVLSDEIGFNSNQIQKLIFDLCFTFTRCTKPVALVPPVSYADKAASRGRVYYEASLMKKNSKQSRGASSSSASVASSSSSVTMEDKEIFKVHAGIENFMFFV.

Residues 1–98 (MDRGGYRGGR…GRGGGGDRGR (98 aa)) are compositionally biased toward basic and acidic residues. Disordered stretches follow at residues 1-277 (MDRG…VSQS) and 299-341 (TVLP…DKGG). The segment covering 142 to 158 (PPSSSQAQVSQGVAPGD) has biased composition (low complexity). Residues 167–180 (VGRDGVGDVGRDGV) are compositionally biased toward basic and acidic residues. The segment covering 181–214 (GDVGQGGVGDVGQVGVGDVGQGGVGDVGQGGVGD) has biased composition (gly residues). Residues 215 to 228 (VGRDGVGDVGRDGV) are compositionally biased toward basic and acidic residues. The segment covering 229–238 (GDVGRGGVGD) has biased composition (gly residues). 2 stretches are compositionally biased toward low complexity: residues 256–277 (QLQQ…VSQS) and 299–316 (TVLP…HTAS). The span at 317-326 (GSQVMTPKPS) shows a compositional bias: polar residues. Residues 327 to 341 (SSDKKEPVKRPDKGG) are compositionally biased toward basic and acidic residues. Positions 540-656 (SVIEYLKLYF…VPMEFCNLVE (117 aa)) constitute a PAZ domain. Residues 841 to 1145 (LVLCAMTGKH…AASRGRVYYE (305 aa)) form the Piwi domain.

This sequence belongs to the argonaute family. Ago subfamily.

In terms of biological role, involved in RNA-mediated post-transcriptional gene silencing (PTGS). Main component of the RNA-induced silencing complex (RISC) that binds to a short guide RNA such as a microRNA (miRNA) or small interfering RNA (siRNA). RISC uses the mature miRNA or siRNA as a guide for slicer-directed cleavage of homologous mRNAs to repress gene expression. This is Protein argonaute 3 (AGO3) from Arabidopsis thaliana (Mouse-ear cress).